Reading from the N-terminus, the 201-residue chain is Adenylyl-sulfate kinase (201 aa).

35-42 (GLSGSGKS) contributes to the ATP binding site. Ser-109 acts as the Phosphoserine intermediate in catalysis.

It belongs to the APS kinase family.

It catalyses the reaction adenosine 5'-phosphosulfate + ATP = 3'-phosphoadenylyl sulfate + ADP + H(+). The protein operates within sulfur metabolism; hydrogen sulfide biosynthesis; sulfite from sulfate: step 2/3. Catalyzes the synthesis of activated sulfate. The polypeptide is Adenylyl-sulfate kinase (Salmonella paratyphi A (strain AKU_12601)).